The chain runs to 156 residues: RNA polymerase sigma factor SigS (156 aa).

The Polymerase core binding signature appears at 29–44 (EYYQLLLIKMWQLSQI). Residues 126–145 (QFEIAEIMSLSLSTIKLIKM) constitute a DNA-binding region (H-T-H motif).

It belongs to the sigma-70 factor family.

In terms of biological role, sigma factors are initiation factors that promote the attachment of RNA polymerase to specific initiation sites and are then released. Sigma-S contributes to the protection against external stress, thus playing a role in cellular fitness and survival. This is RNA polymerase sigma factor SigS (sigS) from Staphylococcus aureus (strain Mu50 / ATCC 700699).